Reading from the N-terminus, the 33-residue chain is Thrombin-like enzyme RP34 (33 aa).

The Peptidase S1 domain maps to 1–33 (VIGGDEXDINEHRSLALMYXSWSHRFIXXGXLI).

The protein belongs to the peptidase S1 family. Snake venom subfamily. In terms of assembly, homodimer. Expressed by the venom gland.

It localises to the secreted. It carries out the reaction Selective cleavage of Arg-|-Xaa bond in fibrinogen, to form fibrin, and release fibrinopeptide A. The specificity of further degradation of fibrinogen varies with species origin of the enzyme.. Its function is as follows. Thrombin-like snake venom serine protease that displays clotting activity on fibrinogen. Shows both arginine-ester hydrolase and amidase activities on synthetic substrates. Also shows proteolytic activity toward casein. The sequence is that of Thrombin-like enzyme RP34 from Cerastes cerastes (Horned desert viper).